A 348-amino-acid polypeptide reads, in one-letter code: Large ribosomal subunit protein uL3m (348 aa).

A mitochondrion-targeting transit peptide spans 1–40; the sequence is MPGWRLLAWAGARVLDRGTGGLGTALGSGNRTDICVLVRS.

The protein belongs to the universal ribosomal protein uL3 family. In terms of assembly, component of the mitochondrial ribosome large subunit (39S) which comprises a 16S rRNA and about 50 distinct proteins.

The protein resides in the mitochondrion. This is Large ribosomal subunit protein uL3m (MRPL3) from Bos taurus (Bovine).